We begin with the raw amino-acid sequence, 1979 residues long: Myosin-11 (1979 aa).

Position 2 is a blocked amino end (Ser) (serine 2). The Myosin N-terminal SH3-like domain occupies 30-80 (SAKKLVWVPSEKHGFEAASIKEEKGDEVTVELQENGKKVTLSKDDIQKMNP). Residues 84–789 (SKVEDMAELT…VLAHLEEERD (706 aa)) form the Myosin motor domain. The residue at position 128 (lysine 128) is an N6,N6,N6-trimethyllysine. Position 177–184 (177–184 (GESGAGKT)) interacts with ATP. Actin-binding regions lie at residues 667 to 689 (LTKL…IPNH) and 768 to 782 (RIGQ…GVLA). Positions 792–821 (ITDVIIAFQAQCRGYLARKAFAKRQQQLTA) constitute an IQ domain. Residues 850–1979 (LLQVTRQEEE…DGDFNGKASE (1130 aa)) are rodlike tail (S2 and LMM domains). Residues 850 to 1979 (LLQVTRQEEE…DGDFNGKASE (1130 aa)) adopt a coiled-coil conformation. 3 disordered regions span residues 1130–1150 (QEDL…KRDL), 1709–1736 (RKQA…LQDE), and 1891–1979 (QLEE…KASE). Over residues 1135-1150 (SEKAARNKAEKQKRDL) the composition is skewed to basic and acidic residues. Basic and acidic residues predominate over residues 1968–1979 (GRDGDFNGKASE).

This sequence belongs to the TRAFAC class myosin-kinesin ATPase superfamily. Myosin family. In terms of assembly, muscle myosin is a hexameric protein that consists of 2 heavy chain subunits (MHC), 2 alkali light chain subunits (MLC) and 2 regulatory light chain subunits (MLC-2).

It is found in the cytoplasm. The protein localises to the myofibril. Its function is as follows. Muscle contraction. In Gallus gallus (Chicken), this protein is Myosin-11 (MYH11).